We begin with the raw amino-acid sequence, 49 residues long: uncharacterized protein (49 aa).

The helical transmembrane segment at 23–43 (LYVISFVLFIVLFFGMFFKLI) threads the bilayer.

The protein localises to the host membrane. This is an uncharacterized protein from Spiroplasma melliferum (SpV1).